The sequence spans 59 residues: Large ribosomal subunit protein uL30 (59 aa).

It belongs to the universal ribosomal protein uL30 family. As to quaternary structure, part of the 50S ribosomal subunit.

This chain is Large ribosomal subunit protein uL30, found in Staphylococcus epidermidis (strain ATCC 12228 / FDA PCI 1200).